The chain runs to 689 residues: Glycine--tRNA ligase beta subunit (689 aa).

It belongs to the class-II aminoacyl-tRNA synthetase family. Tetramer of two alpha and two beta subunits.

The protein localises to the cytoplasm. It carries out the reaction tRNA(Gly) + glycine + ATP = glycyl-tRNA(Gly) + AMP + diphosphate. The sequence is that of Glycine--tRNA ligase beta subunit from Escherichia coli O8 (strain IAI1).